Consider the following 195-residue polypeptide: Imidazoleglycerol-phosphate dehydratase (195 aa).

Belongs to the imidazoleglycerol-phosphate dehydratase family.

The protein resides in the cytoplasm. It catalyses the reaction D-erythro-1-(imidazol-4-yl)glycerol 3-phosphate = 3-(imidazol-4-yl)-2-oxopropyl phosphate + H2O. It functions in the pathway amino-acid biosynthesis; L-histidine biosynthesis; L-histidine from 5-phospho-alpha-D-ribose 1-diphosphate: step 6/9. The chain is Imidazoleglycerol-phosphate dehydratase from Methanosphaerula palustris (strain ATCC BAA-1556 / DSM 19958 / E1-9c).